The chain runs to 487 residues: DNA ligase (487 aa).

Lysine 159 (N6-AMP-lysine intermediate) is an active-site residue. Residues arginine 164, arginine 182, and glutamate 217 each coordinate ATP. An a divalent metal cation-binding site is contributed by glutamate 217. Residues 229 to 237 are interaction with the sliding clamp; it reads EGLDFLFDA. Position 344 (glutamate 344) interacts with a divalent metal cation. ATP-binding residues include arginine 359 and lysine 365.

The protein belongs to the ATP-dependent DNA ligase family. As to quaternary structure, interacts with the sliding clamp. A divalent metal cation is required as a cofactor.

It catalyses the reaction ATP + (deoxyribonucleotide)n-3'-hydroxyl + 5'-phospho-(deoxyribonucleotide)m = (deoxyribonucleotide)n+m + AMP + diphosphate.. Functionally, DNA ligase, which is expressed in the early stage of lytic development, has been implicated in T4 DNA synthesis and genetic recombination. It may also play a role in T4 DNA repair. The sequence is that of DNA ligase (30) from Escherichia coli (Bacteriophage T6).